The sequence spans 1139 residues: Solute carrier family 12 member 5 (1139 aa).

Disordered regions lie at residues 1 to 62 and 95 to 116; these read MSRR…KGRE and PQGSKEHEEAENNEGGKKKPVQ. Topologically, residues 1 to 98 are cytoplasmic; the sequence is MSRRFTVTSL…ANYTNLPQGS (98 aa). Basic and acidic residues predominate over residues 21 to 45; sequence PESRRHSVADPRRLPREDVKGDGNP. A compositionally biased stretch (polar residues) spans 46-55; sequence KESSPFINST. T57 carries the phosphothreonine modification. The segment covering 98 to 111 has biased composition (basic and acidic residues); that stretch reads SKEHEEAENNEGGK. A discontinuously helical transmembrane segment spans residues 99–120; that stretch reads KEHEEAENNEGGKKKPVQAPRM. Residue K113 coordinates K(+). At 121 to 129 the chain is on the extracellular side; it reads GTFMGVYLP. A helical membrane pass occupies residues 130-151; sequence CLQNIFGVILFLRLTWVVGIAG. The Cytoplasmic segment spans residues 152–174; that stretch reads IMESFCMVFICCSCTMLTAISMS. A helical membrane pass occupies residues 175-203; the sequence is AIATNGVVPAGGSYYMISRSLGPEFGGAV. A184 lines the chloride pocket. Residues 204 to 229 lie on the Extracellular side of the membrane; sequence GLCFYLGTTFAGAMYILGTIEILLAY. Transmembrane regions (helical) follow at residues 230–250 and 251–276; these read LFPAMAIFKAEDASGEAAAML and NNMRVYGTCVLTCMATVVFVGVKYVN. At 277-402 the chain is on the extracellular side; that stretch reads KFALVFLGCV…ERRGMPSVGL (126 aa). A disulfide bridge connects residues C310 and C325. 4 N-linked (GlcNAc...) asparagine glycosylation sites follow: N314, N333, N351, and N362. C345 and C354 are disulfide-bonded. Residues 403–420 traverse the membrane as a helical segment; it reads ADGTPVDMDHPYVFSDMT. A K(+)-binding site is contributed by M410. Chloride-binding residues include Y414 and V415. The Cytoplasmic segment spans residues 421–429; it reads SYFTLLVGI. Residues 430–453 traverse the membrane as a helical segment; it reads YFPSVTGIMAGSNRSGDLRDAQKS. D446 is a binding site for K(+). Topologically, residues 454–485 are extracellular; it reads IPTGTILAIATTSAVYISSVVLFGACIEGVVL. The chain crosses the membrane as a helical span at residues 486–513; sequence RDKFGEAVNGNLVVGTLAWPSPWVIVIG. Topologically, residues 514–534 are cytoplasmic; it reads SFFSTCGAGLQSLTGAPRLLQ. 2 consecutive transmembrane segments (helical) span residues 535–555 and 556–578; these read AISRDGIVPFLQVFGHGKANG and EPTWALLLTACICEIGILIASLD. E569 provides a ligand contact to chloride. Residues 579–592 lie on the Cytoplasmic side of the membrane; that stretch reads EVAPILSMFFLMCY. Helical transmembrane passes span 593 to 615 and 616 to 632; these read MFVNLACAVQTLLRTPNWRPRFR and YYHWTLSFLGMSLCLAL. Topologically, residues 633-1139 are cytoplasmic; it reads MFICSWYYAL…GGREVITIYS (507 aa). The segment at 667-681 is scissor helix; the sequence is GIRGLSLSAARYALL. T929 is subject to Phosphothreonine; by OXSR1 and STK39. Positions 943 to 1025 are disordered; that stretch reads HLTKNERERE…PEGEGETDPE (83 aa). Residues 945–962 show a composition bias toward basic and acidic residues; the sequence is TKNEREREIQSITDESRG. The segment covering 982 to 994 has biased composition (acidic residues); sequence TACDNEEKPEEEV. Residues 1003-1012 show a composition bias toward low complexity; that stretch reads PSCPSSSPSP. T1030 is modified (phosphothreonine; by OXSR1 and STK39). Positions 1033–1052 are disordered; it reads KDKSAAQKNKGPSPVSSEGI. Phosphoserine is present on residues S1045, S1048, and S1049.

This sequence belongs to the SLC12A transporter family. K/Cl co-transporter subfamily. As to quaternary structure, homodimer; adopts a domain-swap conformation at the scissor helices connecting the transmembrane domain and C-terminal domain. Heterodimer wHeterodimer with K-Cl cotransporters SLC12A6 and SLC12A7. Interacts with AP2A1. Post-translationally, phosphorylated at Thr-929 and Thr-1030 by OXSR1/OSR1 and STK39/SPAK downstream of WNK kinases (WNK1, WNK2, WNK3 or WNK4), inhibiting the potassium-chloride cotransport activity. Highly expressed in brain. Not detected in other tissues. Highly expressed in pyramidal neurons and in neurons throughout the cortex, hippocampus, the granular layer of the cerebellum and in groups of neurons throughout the brainstem. Barely detectable in dorsal-root ganglions.

Its subcellular location is the cell membrane. The protein localises to the cell projection. It localises to the dendrite. The enzyme catalyses K(+)(in) + chloride(in) = K(+)(out) + chloride(out). With respect to regulation, inhibited following phosphorylation by OXSR1/OSR1 and STK39/SPAK: phosphorylation takes place downstream of WNK kinases (WNK1, WNK2, WNK3 or WNK4) in response to hyperosmotic stress and subsequent cell shrinkage. Mediates electroneutral potassium-chloride cotransport in mature neurons and is required for neuronal Cl(-) homeostasis. As major extruder of intracellular chloride, it establishes the low neuronal Cl(-) levels required for chloride influx after binding of GABA-A and glycine to their receptors, with subsequent hyperpolarization and neuronal inhibition. Involved in the regulation of dendritic spine formation and maturation. The polypeptide is Solute carrier family 12 member 5 (Slc12a5) (Rattus norvegicus (Rat)).